A 794-amino-acid polypeptide reads, in one-letter code: Protein IQ-DOMAIN 32 (794 aa).

The interval 15 to 101 (CSGGDDTSAD…QSFSVDEKKS (87 aa)) is disordered. Polar residues-rich tracts occupy residues 23-33 (ADPNSTALENK) and 56-65 (SVVSETTPAS). Residues S78, S80, S142, S193, and S195 each carry the phosphoserine modification. Positions 80 to 95 (SPDNNNVSEKQQQSFS) are enriched in polar residues. 2 IQ domains span residues 214–242 (DESV…KVIK) and 243–265 (LQAA…CVQA). A calmodulin-binding region spans residues 230-241 (ARRELLRSKKVI). Residues 277–296 (HSTKDGSRVSATSDKSEPNA) form a disordered region. A Phosphoserine modification is found at S369. Residues 375 to 417 (VNSDSTVENKTETDMPSYEASKVEGQNVELSETEKMSQYDSPE) form a disordered region. Phosphoserine is present on S459. Disordered stretches follow at residues 472 to 555 (ELTS…RVEA) and 578 to 794 (ATSM…KWQR). The span at 473–486 (LTSSTGSNKAMTLS) shows a compositional bias: polar residues. Residues 487–500 (SKDDVLGEEGKTDI) show a composition bias toward basic and acidic residues. 2 positions are modified to phosphoserine: S502 and S544. 2 stretches are compositionally biased toward basic and acidic residues: residues 539 to 555 (TLEK…RVEA) and 585 to 607 (EDPK…HHEP). Residues 643–654 (SQATPASQASSS) are compositionally biased toward low complexity. The Nuclear localization signal motif lies at 657 to 664 (ARKGKSEK). A compositionally biased stretch (polar residues) spans 768–786 (NGKQVSPRIQRSASQAQQG).

It belongs to the IQD family. Binds to multiple calmodulin (CaM) in the presence of Ca(2+) and CaM-like proteins.

It is found in the nucleus. It localises to the cytoplasm. The protein resides in the cytoskeleton. In terms of biological role, may be involved in cooperative interactions with calmodulins or calmodulin-like proteins. Recruits calmodulin proteins to microtubules, thus being a potential scaffold in cellular signaling and trafficking. May associate with nucleic acids and regulate gene expression at the transcriptional or post-transcriptional level. The polypeptide is Protein IQ-DOMAIN 32 (Arabidopsis thaliana (Mouse-ear cress)).